The primary structure comprises 243 residues: Proteasome subunit beta (243 aa).

Composition is skewed to basic and acidic residues over residues 1-11 and 33-47; these read MRTPTHDEFSG and NADR…KETK. Residues 1-49 constitute a propeptide, removed in mature form; by autocatalysis; that stretch reads MRTPTHDEFSGRLDSLNGDRSNVFGPELGEFSNADRRADELGDKETKTG. The disordered stretch occupies residues 1-50; that stretch reads MRTPTHDEFSGRLDSLNGDRSNVFGPELGEFSNADRRADELGDKETKTGT. Residue T50 is the Nucleophile of the active site. At S129 the chain carries Phosphoserine.

This sequence belongs to the peptidase T1B family. In terms of assembly, the 20S proteasome core is composed of 14 alpha and 14 beta subunits that assemble into four stacked heptameric rings, resulting in a barrel-shaped structure. The two inner rings, each composed of seven catalytic beta subunits, are sandwiched by two outer rings, each composed of seven alpha subunits. H.volcanii produces at least 2 types of 20S proteasomes: an alpha1-beta proteasome and a proteasome containing all three subunits (alpha1, alpha2, and beta) that appears to be asymmetrical with homo-oligomeric alpha1 and alpha2 rings positioned on separate ends. The catalytic chamber with the active sites is on the inside of the barrel. Has probably a gated structure, the ends of the cylinder being occluded by the N-termini of the alpha-subunits. Is likely capped at one or both ends by the proteasome regulatory ATPase, PAN.

It localises to the cytoplasm. The enzyme catalyses Cleavage of peptide bonds with very broad specificity.. Its activity is regulated as follows. The formation of the proteasomal ATPase PAN-20S proteasome complex, via the docking of the C-termini of PAN into the intersubunit pockets in the alpha-rings, triggers opening of the gate for substrate entry. Interconversion between the open-gate and close-gate conformations leads to a dynamic regulation of the 20S proteasome proteolysis activity. In vitro, the chymotrypsin-like activity of the alpha1-beta proteasome is potently inhibited by carbobenzoxyl-leucinyl-leucinyl-leucinal-H (MG132) and significantly by N-acetyl-leucinyl-leucinyl-norleucinal-H (calpain inhibitor I). Component of the proteasome core, a large protease complex with broad specificity involved in protein degradation. The H.volcanii alpha1-beta proteasome is able to cleave oligopeptides after Phe, Tyr and Trp, poorly after Glu but not after Arg. Thus, displays chymotrypsin-like activity, low caspase-like activity but no trypsin-like activity. This chain is Proteasome subunit beta, found in Haloferax volcanii (strain ATCC 29605 / DSM 3757 / JCM 8879 / NBRC 14742 / NCIMB 2012 / VKM B-1768 / DS2) (Halobacterium volcanii).